A 163-amino-acid chain; its full sequence is Nucleotide-binding protein Acel_0286 (163 aa).

Belongs to the YajQ family.

Its function is as follows. Nucleotide-binding protein. This Acidothermus cellulolyticus (strain ATCC 43068 / DSM 8971 / 11B) protein is Nucleotide-binding protein Acel_0286.